A 329-amino-acid chain; its full sequence is GTP 3',8-cyclase (329 aa).

The 229-residue stretch at methionine 1–alanine 229 folds into the Radical SAM core domain. Arginine 8 is a GTP binding site. [4Fe-4S] cluster is bound by residues cysteine 15 and cysteine 19. Tyrosine 21 is a binding site for S-adenosyl-L-methionine. [4Fe-4S] cluster is bound at residue cysteine 22. Residue arginine 60 coordinates GTP. Glycine 64 lines the S-adenosyl-L-methionine pocket. Threonine 91 is a binding site for GTP. Serine 115 contributes to the S-adenosyl-L-methionine binding site. Position 155 (lysine 155) interacts with GTP. An S-adenosyl-L-methionine-binding site is contributed by methionine 189. Cysteine 252 and cysteine 255 together coordinate [4Fe-4S] cluster. Arginine 257–arginine 259 serves as a coordination point for GTP. Cysteine 269 provides a ligand contact to [4Fe-4S] cluster.

This sequence belongs to the radical SAM superfamily. MoaA family. In terms of assembly, monomer and homodimer. The cofactor is [4Fe-4S] cluster.

The catalysed reaction is GTP + AH2 + S-adenosyl-L-methionine = (8S)-3',8-cyclo-7,8-dihydroguanosine 5'-triphosphate + 5'-deoxyadenosine + L-methionine + A + H(+). It participates in cofactor biosynthesis; molybdopterin biosynthesis. Its function is as follows. Catalyzes the cyclization of GTP to (8S)-3',8-cyclo-7,8-dihydroguanosine 5'-triphosphate. The protein is GTP 3',8-cyclase of Cyanothece sp. (strain PCC 7425 / ATCC 29141).